A 276-amino-acid chain; its full sequence is Putative ABC transporter ATP-binding protein MA_4021 (276 aa).

Positions 5–247 (FDLKNISYSY…DLNLLLSTNL (243 aa)) constitute an ABC transporter domain. An ATP-binding site is contributed by 38–45 (GSNGSGKS).

It belongs to the ABC transporter superfamily.

Its subcellular location is the cell membrane. Its function is as follows. Probably part of an ABC transporter complex. Responsible for energy coupling to the transport system. This Methanosarcina acetivorans (strain ATCC 35395 / DSM 2834 / JCM 12185 / C2A) protein is Putative ABC transporter ATP-binding protein MA_4021.